We begin with the raw amino-acid sequence, 279 residues long: Acetylglutamate kinase (279 aa).

Substrate-binding positions include 64–65 (GG), Arg86, and Asn177.

The protein belongs to the acetylglutamate kinase family. ArgB subfamily.

Its subcellular location is the cytoplasm. It carries out the reaction N-acetyl-L-glutamate + ATP = N-acetyl-L-glutamyl 5-phosphate + ADP. The protein operates within amino-acid biosynthesis; L-arginine biosynthesis; N(2)-acetyl-L-ornithine from L-glutamate: step 2/4. Catalyzes the ATP-dependent phosphorylation of N-acetyl-L-glutamate. This chain is Acetylglutamate kinase, found in Campylobacter jejuni subsp. jejuni serotype O:6 (strain 81116 / NCTC 11828).